The primary structure comprises 597 residues: Arginine--tRNA ligase (597 aa).

Positions 138–148 (ANPTGPMHVGH) match the 'HIGH' region motif.

Belongs to the class-I aminoacyl-tRNA synthetase family. In terms of assembly, monomer.

It localises to the cytoplasm. It carries out the reaction tRNA(Arg) + L-arginine + ATP = L-arginyl-tRNA(Arg) + AMP + diphosphate. The polypeptide is Arginine--tRNA ligase (Nitrobacter hamburgensis (strain DSM 10229 / NCIMB 13809 / X14)).